The primary structure comprises 156 residues: Extracellular giant hemoglobin major globin subunit A1 (156 aa).

Residues methionine 1 to alanine 16 form the signal peptide. Residues valine 17–glycine 156 enclose the Globin domain. Cysteines 18 and 146 form a disulfide. Cysteine 79 serves as a coordination point for hydrogen sulfide. Histidine 110 contributes to the heme b binding site.

The protein belongs to the globin family. The 400 kDa hemoglobin consists of a spherical 24-mer arranged as a double layer of dome-shaped dodecamers. Each dodecamer is composed of the 3-fold trimer of the tetramer A1-A2-B1-B2 having one intra-tetramer (A1-B2) disulfide bond and one inter-tetramer (B1-B2) disulfide bond per tetramer.

The protein localises to the secreted. The extracellular giant hemoglobin is able to bind and transport oxygen and hydrosulfide simultaneously and reversibly at two different sites. The protein is Extracellular giant hemoglobin major globin subunit A1 (ghbA1) of Oligobrachia mashikoi (Beard worm).